The following is a 293-amino-acid chain: NAD-dependent protein deacetylase (293 aa).

The region spanning 1 to 284 is the Deacetylase sirtuin-type domain; it reads MTVAITQTGP…QPPDPLHTAT (284 aa). Residues 27–47 and 105–108 contribute to the NAD(+) site; these read GAGC…GGWK and QNVD. Residue histidine 123 is the Proton acceptor of the active site. Zn(2+) is bound by residues cysteine 131, cysteine 134, cysteine 182, and cysteine 185. Residues 222–224, 248–250, and cysteine 266 each bind NAD(+); these read GSS and NFG.

Belongs to the sirtuin family. Class II subfamily. Zn(2+) serves as cofactor.

It localises to the cytoplasm. It catalyses the reaction N(6)-acetyl-L-lysyl-[protein] + NAD(+) + H2O = 2''-O-acetyl-ADP-D-ribose + nicotinamide + L-lysyl-[protein]. NAD-dependent protein deacetylase which modulates the activities of several enzymes which are inactive in their acetylated form. The polypeptide is NAD-dependent protein deacetylase (Xanthomonas campestris pv. campestris (strain B100)).